A 3374-amino-acid polypeptide reads, in one-letter code: Abnormal spindle-like microcephaly-associated protein homolog (3374 aa).

A phosphoserine mark is found at Ser-212, Ser-215, Ser-300, and Ser-325. Positions 492 to 518 are disordered; the sequence is SSKNIVTPPCKAASVARKRKSKGHTGD. At Ser-540 the chain carries Phosphoserine. Positions 855–991 constitute a Calponin-homology (CH) 1 domain; sequence KASXDILLAF…LLWKIALAFQ (137 aa). Positions 992–1013 form a coiled coil; the sequence is VDISLNLDQLKEEIDFLKKTQS. Ser-1038 carries the post-translational modification Phosphoserine. The 152-residue stretch at 1045–1196 folds into the Calponin-homology (CH) 2 domain; it reads SESVKLLMDW…YLSFLCARLL (152 aa). IQ domains follow at residues 1201 to 1230, 1282 to 1313, 1472 to 1503, 1567 to 1596, 1590 to 1619, 1613 to 1642, 1647 to 1678, 1720 to 1749, 1743 to 1772, 1793 to 1822, 1816 to 1847, 1866 to 1897, 1939 to 1968, 1962 to 1993, 2012 to 2043, 2035 to 2066, 2085 to 2116, 2108 to 2137, 2158 to 2189, 2181 to 2212, 2230 to 2261, 2253 to 2284, 2303 to 2334, 2326 to 2357, 2376 to 2407, 2399 to 2430, 2449 to 2480, 2472 to 2503, 2542 to 2573, 2583 to 2612, 2606 to 2637, 2656 to 2685, 2732 to 2763, 2777 to 2806, 2827 to 2856, 2850 to 2881, 2872 to 2903, 2947 to 2976, 2997 to 3028, 3099 to 3128, and 3122 to 3153; these read ETRA…RDKA, HSKS…IILQ, KRAA…VLQS, TRSA…AVVK, ILTA…ATVK, LKKA…IAQQ, LRAS…VLLQ, VRRA…AALK, QSAA…SALK, TRTA…AAVK, EHEA…SVIQ, LRRA…IIIQ, TKGA…AATT, MHQA…VIIQ, VKKA…TLIK, MHMA…IVIQ, TLKA…TLIQ, MRTA…VTKT, LRRS…AVIQ, MHSA…VWVQ, LQKA…TVLQ, MRRA…QVIQ, QXRS…TLIQ, MHAS…VFVQ, LKKA…ALIQ, MHRA…VLIQ, WRHS…VIIQ, KHRA…KVIQ, QHQA…VFVQ, RTQA…AATR, MHLA…VVIQ, IQKS…EKMA, QRKA…QIQS, QKRA…AAVG, IRSS…STIK, LKDS…RIQA, EVKA…RIIQ, RHQA…AALT, LKKS…RLLH, HSRA…RIAK, and LNKR…IRQR.

The protein resides in the cytoplasm. It is found in the cytoskeleton. It localises to the spindle. The protein localises to the nucleus. In terms of biological role, probable role in mitotic spindle regulation and coordination of mitotic processes. May have a preferential role in regulating neurogenesis. The protein is Abnormal spindle-like microcephaly-associated protein homolog (ASPM) of Ovis aries (Sheep).